The chain runs to 1174 residues: K(+) efflux antiporter 2, chloroplastic (1174 aa).

Residues 1-57 (MDFASSVQRQSMFHGGADFASYCLPNRMISAKLCPKGLGGTRFWDPMIDSKVRSAIR) constitute a chloroplast transit peptide. Topologically, residues 58 to 565 (SKRNVSYRSS…MFPQQEVNEE (508 aa)) are stromal. The segment at 119-141 (GSDDREVTFSKEEKDTREQDSAP) is disordered. Residues 142–350 (SLEELRDLLN…ALQRAEKTLF (209 aa)) are a coiled coil. Position 170 is an N6-acetyllysine; by NSI (lysine 170). The span at 420–448 (EAEGEAEKSKNVVLTKKQEVQKDLPRESS) shows a compositional bias: basic and acidic residues. The interval 420–457 (EAEGEAEKSKNVVLTKKQEVQKDLPRESSSHNGTKTSL) is disordered. A helical transmembrane segment spans residues 566-586 (EASLLDVLWLLLASVIFVPLF). The Chloroplast intermembrane portion of the chain corresponds to 587–592 (QKIPGG). The helical transmembrane segment at 593–613 (SPVLGYLAAGILIGPYGLSII) threads the bilayer. The Stromal segment spans residues 614–620 (RNVHGTK). Residues 621-641 (AIAEFGVVFLLFNIGLELSVE) form a helical membrane-spanning segment. Topologically, residues 642–648 (RLSSMKK) are chloroplast intermembrane. A helical transmembrane segment spans residues 649-669 (YVFGLGSAQVLVTAAVIGLIT). Over 670 to 678 (HYVAGQAGP) the chain is Stromal. A helical membrane pass occupies residues 679–699 (AAIVIGNGLALSSTAVVLQVL). Residues 700–713 (QERGESTSRHGRAT) lie on the Chloroplast intermembrane side of the membrane. Residues 714–734 (FSVLLFQDLAVVVLLILIPLI) traverse the membrane as a helical segment. The Stromal segment spans residues 735-746 (SPNSSKGGIGFQ). The chain crosses the membrane as a helical span at residues 747–767 (AIAEALGLAAIKAAVAITGII). Topologically, residues 768–807 (AGGRLLLRPIYKQIAENRNAEIFSANTLLVILGTSLLTAR) are chloroplast intermembrane. Residues 808-828 (AGLSMALGAFLAGLLLAETEF) form a helical membrane-spanning segment. Residues 829-841 (SLQVESDIAPYRG) lie on the Stromal side of the membrane. The chain crosses the membrane as a helical span at residues 842–862 (LLLGLFFMTVGMSIDPKLLLA). Residues 863 to 865 (NFP) are Chloroplast intermembrane-facing. Residues 866–886 (LIMGTLGLLLVGKTILVVIIG) form a helical membrane-spanning segment. The Stromal segment spans residues 887–898 (KLFGISIISAVR). Residues 899–919 (VGLLLAPGGEFAFVAFGEAVN) traverse the membrane as a helical segment. The Chloroplast intermembrane portion of the chain corresponds to 920–928 (QGIMTPQLS). A helical membrane pass occupies residues 929–949 (SLLFLVVGISMALTPWLAAGG). Residues 950–1174 (QLIASRFELQ…NQIIEGTLAI (225 aa)) are Stromal-facing. The RCK N-terminal domain maps to 975 to 1092 (QGHIIICGFG…EKAGATAVVP (118 aa)). The segment at 1141–1174 (SLGYGFSRSTSKPKPPSPSETSDDNQIIEGTLAI) is disordered.

The protein belongs to the monovalent cation:proton antiporter 2 (CPA2) transporter (TC 2.A.37) family. KEA (TC 2.A.37.1) subfamily. In terms of processing, acetylated at Lys-170 by the stromal acetyltransferase enzyme NSI. In terms of tissue distribution, detected in leaves, stems and flowers. Expressed in shoots and roots. Mainly localized to leaf veins, hypocotyls, mesophylls and guard cells. Accumulates at high levels in small and dividing plastids (at protein level).

It is found in the plastid. It localises to the chloroplast inner membrane. Its subcellular location is the plastid inner membrane. It catalyses the reaction K(+)(in) + H(+)(out) = K(+)(out) + H(+)(in). Its activity is regulated as follows. Repressed by sodium ions Na(+). In terms of biological role, electroneutral K(+)/H(+) efflux antiporter modulating monovalent cation and pH homeostasis in plastids, especially during plastid division and thylakoid membrane formation. Transports K(+) and Cs(+) preferentially relative to Na(+) or Li(+). May function in osmotic adjustment. Collaboratively with KEA1, adjusts alkaline stromal pH upon light to dark transitions in plastids. Together with KEA1, critical for chloroplast development, including chloroplast RNA-metabolism (e.g. rRNA maturation, polysome loading and RNA-protein interactions) and plastid gene expression (PGE), ion homeostasis, and photosynthesis. Contributes, during early seedling development, to the regulation of photosynthesis and abscisic acid- (ABA-) mediated primary root growth in a sucrose-dependent manner. Involved in the regulation of reactive oxygen and nitrogen species (ROS and RNS) metabolism. Required in roots for rapid hyperosmotic-induced Ca(2+) responses and for osmo-sensory potentiation in hyperosmotic conditions. May counteract resilience to drought and salt stress, involving photorespiratory pathway and stomata closure. This is K(+) efflux antiporter 2, chloroplastic from Arabidopsis thaliana (Mouse-ear cress).